We begin with the raw amino-acid sequence, 49 residues long: MKRAKKFKDYFEDIKPVTDEELEELLNEPPRRRNRGNFKKAKKEFYRDF.

This is an uncharacterized protein from Archaeoglobus fulgidus (strain ATCC 49558 / DSM 4304 / JCM 9628 / NBRC 100126 / VC-16).